Here is a 358-residue protein sequence, read N- to C-terminus: Nuclear receptor subfamily 1 group I member 3 (358 aa).

The segment at residues proline 18 to serine 93 is a DNA-binding region (nuclear receptor). The NR C4-type zinc-finger motif lies at cysteine 21–cysteine 41. Threonine 48 is subject to Phosphothreonine; by PKC. The NR C4-type zinc-finger motif lies at cysteine 57–cysteine 81. One can recognise an NR LBD domain in the interval glutamine 119–serine 358.

This sequence belongs to the nuclear hormone receptor family. NR1 subfamily. Heterodimer of NR1I3 and RXR. Interacts with PSMC4. Interacts with ECT2. Directly interacts with DNAJC7; this complex may also include HSP90. Interacts with CRY1. Interacts with CRY2 in a ligand-dependent manner. Phosphorylated at Thr-48 by PKC, dephosphorylation of Thr-48 is required for nuclear translocation and activation. In terms of tissue distribution, predominantly expressed in liver.

It localises to the nucleus. The protein localises to the cytoplasm. The protein resides in the cytoskeleton. Its function is as follows. Binds and transactivates the retinoic acid response elements that control expression of the retinoic acid receptor beta 2 and alcohol dehydrogenase 3 genes. Transactivates both the phenobarbital responsive element module of the human CYP2B6 gene and the CYP3A4 xenobiotic response element. The protein is Nuclear receptor subfamily 1 group I member 3 (Nr1i3) of Mus musculus (Mouse).